Reading from the N-terminus, the 885-residue chain is Initiator protein NS1 (885 aa).

The interval 404–477 is disordered; the sequence is AEAGPSGTQP…GREDIFSGAP (74 aa). Polar residues predominate over residues 409 to 423; it reads SGTQPVETAQQSPPT. Positions 452–465 are enriched in gly residues; that stretch reads QAAGGSEMGAGGSA.

Belongs to the parvoviruses initiator protein NS1 family. In terms of assembly, homooligomer. Mg(2+) is required as a cofactor.

The protein localises to the host nucleus. It carries out the reaction ATP + H2O = ADP + phosphate + H(+). Functionally, multifunctional protein which displays endonuclease and helicase activities required for initiating and directing viral DNA replication. Also plays a role in viral packaging and transactivation of several promoters. Binds site-specifically to 2-3 approximate tandem copies within the origins of replication (Ori), unwinds this hairpin region and nicks one DNA strand thereby initiating the rolling circle replication (RCR). In Bombyx mori densovirus (BmDNV), this protein is Initiator protein NS1.